A 136-amino-acid chain; its full sequence is Piercer of microtubule wall 1 protein (136 aa).

Residues 1–24 (MAEECPRACAEPVAPKATAPPERT) form a disordered region.

It belongs to the PIERCE1 family. As to quaternary structure, microtubule inner protein component of sperm flagellar doublet microtubules. Interacts with CFAP53, ODAD1 and ODAD3; the interactions link the outer dynein arms docking complex (ODA-DC) to the internal microtubule inner proteins (MIP) in cilium axoneme. Expressed in airway epithelial cells.

The protein localises to the cytoplasm. Its subcellular location is the cytoskeleton. It is found in the cilium axoneme. It localises to the flagellum axoneme. Functionally, microtubule inner protein involved in the attachment of outer dynein arms (ODAs) to dynein-decorated doublet microtubules (DMTs) in cilia axoneme, which is required for motile cilia beating. Functions at the initial step of left-right asymmetry specification of the visceral organs. In Homo sapiens (Human), this protein is Piercer of microtubule wall 1 protein.